A 495-amino-acid chain; its full sequence is ATP synthase subunit beta, chloroplastic (495 aa).

Residue Gly172–Thr179 participates in ATP binding.

This sequence belongs to the ATPase alpha/beta chains family. As to quaternary structure, F-type ATPases have 2 components, CF(1) - the catalytic core - and CF(0) - the membrane proton channel. CF(1) has five subunits: alpha(3), beta(3), gamma(1), delta(1), epsilon(1). CF(0) has four main subunits: a(1), b(1), b'(1) and c(9-12).

The protein resides in the plastid. Its subcellular location is the chloroplast thylakoid membrane. It catalyses the reaction ATP + H2O + 4 H(+)(in) = ADP + phosphate + 5 H(+)(out). Produces ATP from ADP in the presence of a proton gradient across the membrane. The catalytic sites are hosted primarily by the beta subunits. The sequence is that of ATP synthase subunit beta, chloroplastic from Pteridium aquilinum (Bracken fern).